Reading from the N-terminus, the 435-residue chain is Cysteine--tRNA ligase (435 aa).

Position 24 (Cys24) interacts with Zn(2+). The 'HIGH' region motif lies at 26 to 36 (PTVYDHIHIGN). Zn(2+) contacts are provided by Cys202, His228, and Glu232. The short motif at 260-264 (KMSKS) is the 'KMSKS' region element. Lys263 is an ATP binding site.

The protein belongs to the class-I aminoacyl-tRNA synthetase family. As to quaternary structure, monomer. Zn(2+) serves as cofactor.

It is found in the cytoplasm. The enzyme catalyses tRNA(Cys) + L-cysteine + ATP = L-cysteinyl-tRNA(Cys) + AMP + diphosphate. The sequence is that of Cysteine--tRNA ligase from Mycoplasmoides gallisepticum (strain R(low / passage 15 / clone 2)) (Mycoplasma gallisepticum).